A 452-amino-acid polypeptide reads, in one-letter code: MNIVILAAGMGKRMQSALPKVLHPLAGKPLLSHVIDTARQLSPSTLCIIYGHGGEQVPQLLQSKDLSFAKQEPQLGTGHAVMQAVPQLNDDSPTLILYGDVPLTTAASLQRLLDIAGADKLGILTVDLDNPTGYGRIVRENGAITRIVEQKDANEQERSIREVNTGIIVAPTKQLKTWLANLSNKNAQGEYYLTDIVASAVADGVQVVSAQPDHVWETHGVNSKVQLAELERVHQNNIARALLEHGVTLADPARIDVRGTLTCGRDVSIDVGCIFEGDVTLADGVRIDAYCVLHNTTVGAQTHIRPYSHFEGATVGTACIIGPYARLRPGAVLGEDVHIGNFVEVKNSDIAAHSKANHLTYIGDSTIGSRVNIGAGTITCNYDGVNKSRTIIEDDVFVGSATQLIAPIRVGKGSTIGAGTTLTKDAPADKLTVSRSRQITVDGWQRPVKIKK.

The interval 1–224 is pyrophosphorylase; the sequence is MNIVILAAGM…VWETHGVNSK (224 aa). Residues 6–9, K20, Q71, 76–77, 98–100, G135, E149, N164, and N222 contribute to the UDP-N-acetyl-alpha-D-glucosamine site; these read LAAG, GT, and YGD. Position 100 (D100) interacts with Mg(2+). N222 is a binding site for Mg(2+). The linker stretch occupies residues 225–245; that stretch reads VQLAELERVHQNNIARALLEH. The segment at 246–452 is N-acetyltransferase; it reads GVTLADPARI…GWQRPVKIKK (207 aa). UDP-N-acetyl-alpha-D-glucosamine-binding residues include R328 and K346. Residue H358 is the Proton acceptor of the active site. 2 residues coordinate UDP-N-acetyl-alpha-D-glucosamine: Y361 and N372. Residues A375, 381–382, S400, A418, and R435 each bind acetyl-CoA; that span reads NY.

The protein in the N-terminal section; belongs to the N-acetylglucosamine-1-phosphate uridyltransferase family. It in the C-terminal section; belongs to the transferase hexapeptide repeat family. As to quaternary structure, homotrimer. Mg(2+) serves as cofactor.

It is found in the cytoplasm. The enzyme catalyses alpha-D-glucosamine 1-phosphate + acetyl-CoA = N-acetyl-alpha-D-glucosamine 1-phosphate + CoA + H(+). It catalyses the reaction N-acetyl-alpha-D-glucosamine 1-phosphate + UTP + H(+) = UDP-N-acetyl-alpha-D-glucosamine + diphosphate. It participates in nucleotide-sugar biosynthesis; UDP-N-acetyl-alpha-D-glucosamine biosynthesis; N-acetyl-alpha-D-glucosamine 1-phosphate from alpha-D-glucosamine 6-phosphate (route II): step 2/2. It functions in the pathway nucleotide-sugar biosynthesis; UDP-N-acetyl-alpha-D-glucosamine biosynthesis; UDP-N-acetyl-alpha-D-glucosamine from N-acetyl-alpha-D-glucosamine 1-phosphate: step 1/1. The protein operates within bacterial outer membrane biogenesis; LPS lipid A biosynthesis. Catalyzes the last two sequential reactions in the de novo biosynthetic pathway for UDP-N-acetylglucosamine (UDP-GlcNAc). The C-terminal domain catalyzes the transfer of acetyl group from acetyl coenzyme A to glucosamine-1-phosphate (GlcN-1-P) to produce N-acetylglucosamine-1-phosphate (GlcNAc-1-P), which is converted into UDP-GlcNAc by the transfer of uridine 5-monophosphate (from uridine 5-triphosphate), a reaction catalyzed by the N-terminal domain. The polypeptide is Bifunctional protein GlmU (Herminiimonas arsenicoxydans).